The chain runs to 625 residues: Protein LEO1 homolog (625 aa).

2 disordered regions span residues 1 to 214 (MVKG…DMVL) and 415 to 625 (EREK…SDED). Composition is skewed to acidic residues over residues 40 to 55 (DEAE…GEAE) and 63 to 80 (EAES…PGES). 3 stretches are compositionally biased toward basic and acidic residues: residues 97-113 (SEAR…EHGG), 121-137 (QEVV…KHYE), and 182-197 (EYVR…RSPI). Residue Ser203 is modified to Phosphoserine. Residues 415–425 (EREKEKREKAE) are compositionally biased toward basic and acidic residues. Positions 415-539 (EREKEKREKA…ETEEEEEEKS (125 aa)) form a coiled coil. Positions 426 to 436 (SQNLKASTKLS) are enriched in polar residues. Over residues 471-491 (YRSNRGYEEDLEAEAQRERRI) the composition is skewed to basic and acidic residues. Over residues 492-501 (LNAKKSHKGI) the composition is skewed to basic residues. Over residues 523–537 (EREESEYETEEEEEE) the composition is skewed to acidic residues. Positions 538 to 547 (KSPARGRGKD) are enriched in basic and acidic residues. Residues Ser548, Ser570, Ser600, Ser605, and Ser622 each carry the phosphoserine modification. The segment covering 548–561 (SEDEYEEDAEEDEE) has biased composition (acidic residues).

The protein belongs to the LEO1 family. In terms of assembly, component of the nuclear PAF1 complex (PAF1C), which consists of VIP2/ELF7/PAF1, VIP3/SKI8/WDR61, VIP4/LEO1, VIP5/RTF1, VIP6/ELF8/CTR9 and CDC73. Interacts with VIP3 and VIP6. In terms of tissue distribution, expressed in roots, shoot apices, stems, cauline leaves, inflorescence apices and flowers.

It localises to the nucleus. Its function is as follows. Component of the PAF1 complex (PAF1C) which is involved in histone modifications such as methylation on histone H3 'Lys-4' (H3K4me3). Involved in regulation of flowering time. Required for the expression of the flowering repressor and MADS box gene FLC. Involved in the control of seed dormancy and germination. This is Protein LEO1 homolog from Arabidopsis thaliana (Mouse-ear cress).